A 417-amino-acid polypeptide reads, in one-letter code: Serine hydroxymethyltransferase (417 aa).

Residues L121 and G125–L127 each bind (6S)-5,6,7,8-tetrahydrofolate. At K229 the chain carries N6-(pyridoxal phosphate)lysine. S355–F357 is a (6S)-5,6,7,8-tetrahydrofolate binding site.

It belongs to the SHMT family. In terms of assembly, homodimer. The cofactor is pyridoxal 5'-phosphate.

It localises to the cytoplasm. It carries out the reaction (6R)-5,10-methylene-5,6,7,8-tetrahydrofolate + glycine + H2O = (6S)-5,6,7,8-tetrahydrofolate + L-serine. It functions in the pathway one-carbon metabolism; tetrahydrofolate interconversion. Its pathway is amino-acid biosynthesis; glycine biosynthesis; glycine from L-serine: step 1/1. Catalyzes the reversible interconversion of serine and glycine with tetrahydrofolate (THF) serving as the one-carbon carrier. This reaction serves as the major source of one-carbon groups required for the biosynthesis of purines, thymidylate, methionine, and other important biomolecules. Also exhibits THF-independent aldolase activity toward beta-hydroxyamino acids, producing glycine and aldehydes, via a retro-aldol mechanism. This chain is Serine hydroxymethyltransferase, found in Xylella fastidiosa (strain M12).